A 634-amino-acid polypeptide reads, in one-letter code: Chaperone protein HtpG (634 aa).

An a; substrate-binding region spans residues 1 to 342 (MTVASHKETL…SNDLPLNISR (342 aa)). The b stretch occupies residues 343 to 559 (EILQNNRVID…QHDMSGYLER (217 aa)). The segment at 560 to 634 (LLKEAGQQAP…LNSLLLAMAD (75 aa)) is c.

The protein belongs to the heat shock protein 90 family. As to quaternary structure, homodimer.

It is found in the cytoplasm. Molecular chaperone. Has ATPase activity. The protein is Chaperone protein HtpG of Nitrosococcus oceani (strain ATCC 19707 / BCRC 17464 / JCM 30415 / NCIMB 11848 / C-107).